A 320-amino-acid polypeptide reads, in one-letter code: Nucleotide-binding protein Pcryo_0127 (320 aa).

An ATP-binding site is contributed by 32–39 (GRSGSGKT). 82–85 (DIRT) contacts GTP.

The protein belongs to the RapZ-like family.

Functionally, displays ATPase and GTPase activities. The chain is Nucleotide-binding protein Pcryo_0127 from Psychrobacter cryohalolentis (strain ATCC BAA-1226 / DSM 17306 / VKM B-2378 / K5).